Consider the following 237-residue polypeptide: tRNA (guanine-N(7)-)-methyltransferase (237 aa).

4 residues coordinate S-adenosyl-L-methionine: Glu67, Glu92, Asp119, and Asp142. Asp142 is a catalytic residue. Substrate-binding positions include Lys146, Asp178, and 215 to 218; that span reads TKFE.

It belongs to the class I-like SAM-binding methyltransferase superfamily. TrmB family.

It carries out the reaction guanosine(46) in tRNA + S-adenosyl-L-methionine = N(7)-methylguanosine(46) in tRNA + S-adenosyl-L-homocysteine. It participates in tRNA modification; N(7)-methylguanine-tRNA biosynthesis. In terms of biological role, catalyzes the formation of N(7)-methylguanine at position 46 (m7G46) in tRNA. In Aeromonas hydrophila subsp. hydrophila (strain ATCC 7966 / DSM 30187 / BCRC 13018 / CCUG 14551 / JCM 1027 / KCTC 2358 / NCIMB 9240 / NCTC 8049), this protein is tRNA (guanine-N(7)-)-methyltransferase.